The following is a 157-amino-acid chain: MNIKLIAIGKTDNKSLQTLIDDYTKRLSFYIKFDLEIIPDIKNVKNLSESQQKEKEGELILSKLSATDQLILLDENGKTFSSVGFSEELQKKMNSGVKTLVFVIGGPYGFSETIYKKAQGKVSLSLMTFSHQMVRLFFIEQLYRGFTILRNEPYHHQ.

Residues leucine 73, glycine 105, and 124-129 (LSLMTF) contribute to the S-adenosyl-L-methionine site.

It belongs to the RNA methyltransferase RlmH family. Homodimer.

Its subcellular location is the cytoplasm. It carries out the reaction pseudouridine(1915) in 23S rRNA + S-adenosyl-L-methionine = N(3)-methylpseudouridine(1915) in 23S rRNA + S-adenosyl-L-homocysteine + H(+). Its function is as follows. Specifically methylates the pseudouridine at position 1915 (m3Psi1915) in 23S rRNA. This is Ribosomal RNA large subunit methyltransferase H from Flavobacterium johnsoniae (strain ATCC 17061 / DSM 2064 / JCM 8514 / BCRC 14874 / CCUG 350202 / NBRC 14942 / NCIMB 11054 / UW101) (Cytophaga johnsonae).